The primary structure comprises 695 residues: Elongation factor G (695 aa).

Residues 8–282 (EKTRNIGIMA…AVLDYLPAPT (275 aa)) enclose the tr-type G domain. GTP-binding positions include 17–24 (AHIDAGKT), 81–85 (DTPGH), and 135–138 (NKMD).

Belongs to the TRAFAC class translation factor GTPase superfamily. Classic translation factor GTPase family. EF-G/EF-2 subfamily.

It localises to the cytoplasm. Functionally, catalyzes the GTP-dependent ribosomal translocation step during translation elongation. During this step, the ribosome changes from the pre-translocational (PRE) to the post-translocational (POST) state as the newly formed A-site-bound peptidyl-tRNA and P-site-bound deacylated tRNA move to the P and E sites, respectively. Catalyzes the coordinated movement of the two tRNA molecules, the mRNA and conformational changes in the ribosome. In Listeria welshimeri serovar 6b (strain ATCC 35897 / DSM 20650 / CCUG 15529 / CIP 8149 / NCTC 11857 / SLCC 5334 / V8), this protein is Elongation factor G.